Here is a 541-residue protein sequence, read N- to C-terminus: Protein panoramix (541 aa).

An interaction with Piwi region spans residues 1–169; that stretch reads MEAPMKLEVK…TLVPDEQQSF (169 aa). Disordered stretches follow at residues 52–75 and 198–281; these read SDPEDGNLVHHSATPTSDEHLQPS and TAEN…TELD. Positions 194-216 form a coiled coil; that stretch reads MLEMTAENRKVKHKKKKHKKERS. Over residues 203 to 220 the composition is skewed to basic residues; sequence KVKHKKKKHKKERSHRSN. Basic and acidic residues-rich tracts occupy residues 241–251 and 269–279; these read DDKNQFDCDYR and SSKERKLRDTE. Residues 315 to 343 are nxf2-interacting region (NIR); the sequence is LSKADKRSLAVARAELVLEQIQQKANKEE. Residues 323–343 are a coiled coil; it reads LAVARAELVLEQIQQKANKEE. Residues 387-446 form a necessary for interaction with nxf2 and protein stability region; it reads TPGTRIDLSKWGLETVPEATKRLLRLLGIDVARLKELQSTVKPSQRILKLKKEQLEQGLA.

In terms of assembly, in the ovaries, part of a complex composed of at least Panx, nxf2, piwi and Nxt1. The complex is knowns as Panx-induced cotranscriptional silencing (PICTS) complex, Panx-nxf2-dependent TAP/p15 silencing (Pandas complex), SFiNX (silencing factor interacting nuclear export variant) or piwi-Panx-nxf2-p15 (PPNP) complex. Interacts (via NIR region) with nxf2 (via TAP-C domain); the interaction is direct. Expressed in female gonads (at protein level).

The protein resides in the nucleus. Functionally, acts via the piwi-interacting RNA (piRNA) pathway which mediates the repression of transposable elements during meiosis by forming complexes composed of piRNAs and piwi proteins and governs the methylation and subsequent repression of transposons. Required for transcriptional silencing of transposons targeted by piwi and confers its effects by interacting with nascent RNA transcripts. Likely to be recruited to nascent transcripts cotranscriptionally by piwi and to recruit additional factors involved in transcriptional silencing. In the ovaries, forms a complex with nxf2, piwi and Nxt1 which acts as effectors of cotranscriptional transposon silencing. The interaction with nxf2 stabilizes the nuclear protein complex. The protein is Protein panoramix of Drosophila melanogaster (Fruit fly).